The sequence spans 404 residues: Cysteine desulfurase IscS (404 aa).

Pyridoxal 5'-phosphate-binding positions include 75 to 76 (AT), Asn155, Gln183, and 203 to 205 (SAH). Lys206 carries the post-translational modification N6-(pyridoxal phosphate)lysine. Thr243 is a binding site for pyridoxal 5'-phosphate. Cys328 acts as the Cysteine persulfide intermediate in catalysis. Cys328 provides a ligand contact to [2Fe-2S] cluster.

It belongs to the class-V pyridoxal-phosphate-dependent aminotransferase family. NifS/IscS subfamily. In terms of assembly, homodimer. Forms a heterotetramer with IscU, interacts with other sulfur acceptors. Pyridoxal 5'-phosphate is required as a cofactor.

Its subcellular location is the cytoplasm. The enzyme catalyses (sulfur carrier)-H + L-cysteine = (sulfur carrier)-SH + L-alanine. It functions in the pathway cofactor biosynthesis; iron-sulfur cluster biosynthesis. Functionally, master enzyme that delivers sulfur to a number of partners involved in Fe-S cluster assembly, tRNA modification or cofactor biosynthesis. Catalyzes the removal of elemental sulfur atoms from cysteine to produce alanine. Functions as a sulfur delivery protein for Fe-S cluster synthesis onto IscU, an Fe-S scaffold assembly protein, as well as other S acceptor proteins. The chain is Cysteine desulfurase IscS from Vibrio campbellii (strain ATCC BAA-1116).